The sequence spans 2603 residues: Squalestatin tetraketide synthase (2603 aa).

Positions 29–455 constitute a Ketosynthase family 3 (KS3) domain; the sequence is TIPIAIIGMS…GANAHVILES (427 aa). Residues C202, H337, and H377 each act as for beta-ketoacyl synthase activity in the active site. The disordered stretch occupies residues 463–512; it reads IANGSGRSNGTGNGHNGANGTTNGHNGTNGTTNGHFDATQATNGHYGTDE. Positions 469-479 are enriched in gly residues; sequence RSNGTGNGHNG. A compositionally biased stretch (low complexity) spans 480 to 497; that stretch reads ANGTTNGHNGTNGTTNGH. A malonyl-CoA:ACP transacylase (MAT) domain region spans residues 608–931; it reads VFTGQGAQWF…PYISCLLRGQ (324 aa). Residues 1000–1138 form an N-terminal hotdog fold region; sequence HDLLGSLIVG…GRITIEFDTS (139 aa). In terms of domain architecture, PKS/mFAS DH spans 1000–1314; that stretch reads HDLLGSLIVG…NQSVGQMAPQ (315 aa). A dehydratase (DH) domain region spans residues 1000-1314; the sequence is HDLLGSLIVG…NQSVGQMAPQ (315 aa). Residue H1032 is the Proton acceptor; for dehydratase activity of the active site. Positions 1157–1314 are C-terminal hotdog fold; it reads LMRSVDPSNL…NQSVGQMAPQ (158 aa). The active-site Proton donor; for dehydratase activity is D1223. A methyltransferase (CMet) domain region spans residues 1465 to 1665; that stretch reads LYRYYTDAIK…GLDIELRDCD (201 aa). The enoyl reductase (ER) (ER) domain stretch occupies residues 1892 to 2205; sequence GLIDTLQFSK…AGKHMGKIVI (314 aa). Positions 2228–2406 are ketoreductase (KR) domain; sequence ASYLIVGGLG…AVSIDLGMVQ (179 aa). Residues 2516–2593 form the Carrier domain; that stretch reads EAIDVVGRAI…ALATTVATKS (78 aa). S2553 bears the O-(pantetheine 4'-phosphoryl)serine mark.

It participates in secondary metabolite biosynthesis. In terms of biological role, highly reducing polyketide synthase (HR-PKS); part of the gene cluster that mediates the biosynthesis of squalestatin S1 (SQS1, also known as zaragozic acid A), a lead compound for the treatment of hyper-cholesterolemia by targeting squalene synthase (SS). Pks1 is responsible for the biosynthesis of the tetraketide sidechain of SQS1. The biosynthesis must involve 3 rounds of chain extension. After the first and second rounds methyl-transfer occurs, and in all rounds of extension the ketoreductase and dehydratase are active. The enoyl reductase and C-MeT are not active in the final round of extension. The chain is Squalestatin tetraketide synthase from Phoma sp. (strain C2932).